Here is a 177-residue protein sequence, read N- to C-terminus: Disulfide bond formation protein B (177 aa).

Residues Met1–Val14 lie on the Cytoplasmic side of the membrane. A helical membrane pass occupies residues Trp15–Tyr31. Over Phe32 to Leu49 the chain is Periplasmic. Cys41 and Cys44 are oxidised to a cystine. Residues Ala50–Pro65 form a helical membrane-spanning segment. Residues Arg66–Leu72 are Cytoplasmic-facing. Residues Ile73–Phe90 form a helical membrane-spanning segment. Topologically, residues Arg91–Gln145 are periplasmic. Cys105 and Cys131 are joined by a disulfide. A helical transmembrane segment spans residues Trp146–Ala164. Topologically, residues Gln165–Asn177 are cytoplasmic.

Belongs to the DsbB family.

Its subcellular location is the cell inner membrane. Its function is as follows. Required for disulfide bond formation in some periplasmic proteins. Acts by oxidizing the DsbA protein. The chain is Disulfide bond formation protein B from Haemophilus influenzae (strain ATCC 51907 / DSM 11121 / KW20 / Rd).